The primary structure comprises 240 residues: 45 kDa antigen (240 aa).

Fibronectin type-III domains are found at residues 1–109 (EFPD…FHTL) and 110–210 (ANGT…KSGH).

In Taenia ovis (Sheep tapeworm), this protein is 45 kDa antigen.